The primary structure comprises 134 residues: Methylglyoxal synthase (134 aa).

An MGS-like domain is found at 1–134 (MVNLNIALIA…GLLEWRNAVK (134 aa)). Residues histidine 11, lysine 15, and 37 to 40 (TGAT) contribute to the substrate site. Aspartate 63 (proton donor/acceptor) is an active-site residue. Histidine 90 is a substrate binding site.

This sequence belongs to the methylglyoxal synthase family.

The enzyme catalyses dihydroxyacetone phosphate = methylglyoxal + phosphate. Functionally, catalyzes the formation of methylglyoxal from dihydroxyacetone phosphate. In Thermoanaerobacterium thermosaccharolyticum (Clostridium thermosaccharolyticum), this protein is Methylglyoxal synthase.